A 181-amino-acid polypeptide reads, in one-letter code: ATP synthase subunit delta (181 aa).

The protein belongs to the ATPase delta chain family. As to quaternary structure, F-type ATPases have 2 components, F(1) - the catalytic core - and F(0) - the membrane proton channel. F(1) has five subunits: alpha(3), beta(3), gamma(1), delta(1), epsilon(1). F(0) has three main subunits: a(1), b(2) and c(10-14). The alpha and beta chains form an alternating ring which encloses part of the gamma chain. F(1) is attached to F(0) by a central stalk formed by the gamma and epsilon chains, while a peripheral stalk is formed by the delta and b chains.

The protein resides in the cell membrane. F(1)F(0) ATP synthase produces ATP from ADP in the presence of a proton or sodium gradient. F-type ATPases consist of two structural domains, F(1) containing the extramembraneous catalytic core and F(0) containing the membrane proton channel, linked together by a central stalk and a peripheral stalk. During catalysis, ATP synthesis in the catalytic domain of F(1) is coupled via a rotary mechanism of the central stalk subunits to proton translocation. Functionally, this protein is part of the stalk that links CF(0) to CF(1). It either transmits conformational changes from CF(0) to CF(1) or is implicated in proton conduction. The protein is ATP synthase subunit delta of Bacillus velezensis (strain DSM 23117 / BGSC 10A6 / LMG 26770 / FZB42) (Bacillus amyloliquefaciens subsp. plantarum).